A 176-amino-acid chain; its full sequence is Large ribosomal subunit protein uL16 (176 aa).

The protein belongs to the universal ribosomal protein uL16 family.

The sequence is that of Large ribosomal subunit protein uL16 from Picrophilus torridus (strain ATCC 700027 / DSM 9790 / JCM 10055 / NBRC 100828 / KAW 2/3).